Here is a 682-residue protein sequence, read N- to C-terminus: Potassium-transporting ATPase ATP-binding subunit (682 aa).

The next 4 helical transmembrane spans lie at 34-54 (PVMF…IAMA), 62-82 (ALFS…ANFA), 219-239 (IALT…TATL), and 254-274 (VLVA…LSAI). D307 (4-aspartylphosphate intermediate) is an active-site residue. ATP-binding positions include D344, E348, 377–384 (FTAQSRMS), and K395. D518 and D522 together coordinate Mg(2+). 3 consecutive transmembrane segments (helical) span residues 588–608 (FAII…LNIM), 616–636 (AILS…PLAL), and 656–676 (IYGL…DLLL).

It belongs to the cation transport ATPase (P-type) (TC 3.A.3) family. Type IA subfamily. The system is composed of three essential subunits: KdpA, KdpB and KdpC.

It localises to the cell inner membrane. It catalyses the reaction K(+)(out) + ATP + H2O = K(+)(in) + ADP + phosphate + H(+). Part of the high-affinity ATP-driven potassium transport (or Kdp) system, which catalyzes the hydrolysis of ATP coupled with the electrogenic transport of potassium into the cytoplasm. This subunit is responsible for energy coupling to the transport system and for the release of the potassium ions to the cytoplasm. This chain is Potassium-transporting ATPase ATP-binding subunit, found in Shigella boydii serotype 18 (strain CDC 3083-94 / BS512).